The sequence spans 264 residues: S-adenosylmethionine decarboxylase proenzyme (264 aa).

Ser113 functions as the Schiff-base intermediate with substrate; via pyruvic acid in the catalytic mechanism. The residue at position 113 (Ser113) is a Pyruvic acid (Ser); by autocatalysis. Residue His118 is the Proton acceptor; for processing activity of the active site. Catalysis depends on Cys141, which acts as the Proton donor; for catalytic activity.

Belongs to the prokaryotic AdoMetDC family. Type 2 subfamily. Heterooctamer of four alpha and four beta chains arranged as a tetramer of alpha/beta heterodimers. Requires pyruvate as cofactor. In terms of processing, is synthesized initially as an inactive proenzyme. Formation of the active enzyme involves a self-maturation process in which the active site pyruvoyl group is generated from an internal serine residue via an autocatalytic post-translational modification. Two non-identical subunits are generated from the proenzyme in this reaction, and the pyruvate is formed at the N-terminus of the alpha chain, which is derived from the carboxyl end of the proenzyme. The post-translation cleavage follows an unusual pathway, termed non-hydrolytic serinolysis, in which the side chain hydroxyl group of the serine supplies its oxygen atom to form the C-terminus of the beta chain, while the remainder of the serine residue undergoes an oxidative deamination to produce ammonia and the pyruvoyl group blocking the N-terminus of the alpha chain.

It catalyses the reaction S-adenosyl-L-methionine + H(+) = S-adenosyl 3-(methylsulfanyl)propylamine + CO2. The protein operates within amine and polyamine biosynthesis; S-adenosylmethioninamine biosynthesis; S-adenosylmethioninamine from S-adenosyl-L-methionine: step 1/1. Catalyzes the decarboxylation of S-adenosylmethionine to S-adenosylmethioninamine (dcAdoMet), the propylamine donor required for the synthesis of the polyamines spermine and spermidine from the diamine putrescine. This chain is S-adenosylmethionine decarboxylase proenzyme, found in Pseudomonas syringae pv. syringae (strain B728a).